A 366-amino-acid chain; its full sequence is Ribosomal RNA large subunit methyltransferase M (366 aa).

S-adenosyl-L-methionine is bound by residues serine 188, 221-224 (CPGG), aspartate 240, aspartate 260, and aspartate 277. The active-site Proton acceptor is the lysine 306.

It belongs to the class I-like SAM-binding methyltransferase superfamily. RNA methyltransferase RlmE family. RlmM subfamily. In terms of assembly, monomer.

Its subcellular location is the cytoplasm. It carries out the reaction cytidine(2498) in 23S rRNA + S-adenosyl-L-methionine = 2'-O-methylcytidine(2498) in 23S rRNA + S-adenosyl-L-homocysteine + H(+). Catalyzes the 2'-O-methylation at nucleotide C2498 in 23S rRNA. The chain is Ribosomal RNA large subunit methyltransferase M from Klebsiella pneumoniae subsp. pneumoniae (strain ATCC 700721 / MGH 78578).